Reading from the N-terminus, the 138-residue chain is Histone H2AX (138 aa).

The tract at residues 1–23 is disordered; sequence MSTTGKGGKAKGKTASSKQVSRS. An N-acetylserine modification is found at S2. K6, K9, K11, K13, and K18 each carry N6-acetyllysine. At S123 the chain carries Phosphoserine. A Glycyl lysine isopeptide (Lys-Gly) (interchain with G-Cter in ubiquitin) cross-link involves residue K124. Phosphoserine is present on residues S125, S130, and S135. A [ST]-Q motif motif is present at residues 135-136; sequence SQ.

The protein belongs to the histone H2A family. The nucleosome is a histone octamer containing two molecules each of H2A, H2B, H3 and H4 assembled in one H3-H4 heterotetramer and two H2A-H2B heterodimers. The octamer wraps approximately 147 bp of DNA. Monoubiquitination of Lys-124 gives a specific tag for epigenetic transcriptional repression. In terms of processing, acetylation occurs almost exclusively in the MAC.

It localises to the nucleus. It is found in the chromosome. In terms of biological role, core component of nucleosome. Nucleosomes wrap and compact DNA into chromatin, limiting DNA accessibility to the cellular machineries which require DNA as a template. Histones thereby play a central role in transcription regulation, DNA repair, DNA replication and chromosomal stability. DNA accessibility is regulated via a complex set of post-translational modifications of histones, also called histone code, and nucleosome remodeling. The polypeptide is Histone H2AX (HTA1) (Tetrahymena pyriformis).